A 318-amino-acid chain; its full sequence is N-succinylornithine carbamoyltransferase (318 aa).

Carbamoyl phosphate-binding positions include 47–50 (SLRT), W75, and R110. Residue E142 coordinates N(2)-succinyl-L-ornithine. 147–150 (HPLQ) contacts carbamoyl phosphate. The N(2)-succinyl-L-ornithine site is built by H176 and K236. 274–275 (CL) provides a ligand contact to carbamoyl phosphate. R278 contributes to the N(2)-succinyl-L-ornithine binding site. Residue R302 coordinates carbamoyl phosphate.

Belongs to the aspartate/ornithine carbamoyltransferase superfamily. SOTCase family. As to quaternary structure, homotrimer.

The catalysed reaction is N(2)-succinyl-L-ornithine + carbamoyl phosphate = N(2)-succinyl-L-citrulline + phosphate + H(+). It participates in amino-acid biosynthesis; L-arginine biosynthesis. In terms of biological role, catalyzes the transfer of the carbamoyl group from carbamoyl phosphate to the delta-amino group of N(2)-succinyl-L-ornithine to produce N(2)-succinyl-L-citrulline. Is essential for arginine biosynthesis. Has no activity with either L-ornithine or L-aspartate as substrate. Also has no detectable AOTCase activity, being unable to convert N(2)-acetyl-L-ornithine to N(2)-acetyl-L-citrulline. The sequence is that of N-succinylornithine carbamoyltransferase from Bacteroides thetaiotaomicron (strain ATCC 29148 / DSM 2079 / JCM 5827 / CCUG 10774 / NCTC 10582 / VPI-5482 / E50).